Reading from the N-terminus, the 546-residue chain is Probable protein kinase UbiB (546 aa).

A Protein kinase domain is found at 124 to 502 (DFDIQPLASA…HVRQSQSRYL (379 aa)). ATP contacts are provided by residues 130–138 (LASASIAQV) and lysine 153. Residue aspartate 288 is the Proton acceptor of the active site. 2 helical membrane-spanning segments follow: residues 501–521 (YLLG…VNRP) and 522–542 (EWGL…LVGW).

Belongs to the ABC1 family. UbiB subfamily.

It localises to the cell inner membrane. The protein operates within cofactor biosynthesis; ubiquinone biosynthesis [regulation]. Functionally, is probably a protein kinase regulator of UbiI activity which is involved in aerobic coenzyme Q (ubiquinone) biosynthesis. The chain is Probable protein kinase UbiB from Salmonella agona (strain SL483).